The primary structure comprises 437 residues: UDP-N-acetylmuramate--L-alanine ligase (437 aa).

114–120 (GTHGKTS) is an ATP binding site.

It belongs to the MurCDEF family.

It is found in the cytoplasm. The enzyme catalyses UDP-N-acetyl-alpha-D-muramate + L-alanine + ATP = UDP-N-acetyl-alpha-D-muramoyl-L-alanine + ADP + phosphate + H(+). Its pathway is cell wall biogenesis; peptidoglycan biosynthesis. Its function is as follows. Cell wall formation. The protein is UDP-N-acetylmuramate--L-alanine ligase of Lactobacillus johnsonii (strain CNCM I-12250 / La1 / NCC 533).